A 393-amino-acid polypeptide reads, in one-letter code: NAD(P)H-quinone oxidoreductase subunit H, chloroplastic (393 aa).

This sequence belongs to the complex I 49 kDa subunit family. NDH is composed of at least 16 different subunits, 5 of which are encoded in the nucleus.

The protein resides in the plastid. It localises to the chloroplast thylakoid membrane. The enzyme catalyses a plastoquinone + NADH + (n+1) H(+)(in) = a plastoquinol + NAD(+) + n H(+)(out). The catalysed reaction is a plastoquinone + NADPH + (n+1) H(+)(in) = a plastoquinol + NADP(+) + n H(+)(out). In terms of biological role, NDH shuttles electrons from NAD(P)H:plastoquinone, via FMN and iron-sulfur (Fe-S) centers, to quinones in the photosynthetic chain and possibly in a chloroplast respiratory chain. The immediate electron acceptor for the enzyme in this species is believed to be plastoquinone. Couples the redox reaction to proton translocation, and thus conserves the redox energy in a proton gradient. The protein is NAD(P)H-quinone oxidoreductase subunit H, chloroplastic of Lactuca sativa (Garden lettuce).